Reading from the N-terminus, the 360-residue chain is MLYHLAMVLETFYSGFNVFQYITFRTILGVLTALGIALMIGPAVIQRLVLHQVGQQVRDDGPETHLEKAGTPTMGGALILVAIAVSTLLWADLTNRYVWVVLLVTLAFGLIGGVDDALKLARQDSQGLRARTKFSLQVLAALAASTFLFATATDPVETSLVLPLVKEWVFPLGLGFIALATLVIVGSSNAVNLTDGLDGLAIMPTVLVATGLAVFAYASGHHVFADYLGIPSVPGVGELVIFCGAIVGAGLGFLWYNTYPAQVFMGDVGALALGAALGVVAVAVRQEIVLFIMGGIFVMETVSVMIQVLSYKLTGRRVFRMAPLHHHYELKGWPEPRVIVRFWIITVVLVLIGLAMLKVR.

10 helical membrane-spanning segments follow: residues 26-46 (TILG…AVIQ), 73-93 (TMGG…WADL), 98-118 (VWVV…DDAL), 136-156 (LQVL…TDPV), 168-188 (WVFP…VGSS), 199-219 (GLAI…AYAS), 235-255 (GVGE…GFLW), 263-283 (VFMG…VAVA), 288-308 (IVLF…MIQV), and 338-358 (VIVR…AMLK).

Belongs to the glycosyltransferase 4 family. MraY subfamily. Mg(2+) serves as cofactor.

The protein resides in the cell inner membrane. It carries out the reaction UDP-N-acetyl-alpha-D-muramoyl-L-alanyl-gamma-D-glutamyl-meso-2,6-diaminopimeloyl-D-alanyl-D-alanine + di-trans,octa-cis-undecaprenyl phosphate = di-trans,octa-cis-undecaprenyl diphospho-N-acetyl-alpha-D-muramoyl-L-alanyl-D-glutamyl-meso-2,6-diaminopimeloyl-D-alanyl-D-alanine + UMP. Its pathway is cell wall biogenesis; peptidoglycan biosynthesis. Functionally, catalyzes the initial step of the lipid cycle reactions in the biosynthesis of the cell wall peptidoglycan: transfers peptidoglycan precursor phospho-MurNAc-pentapeptide from UDP-MurNAc-pentapeptide onto the lipid carrier undecaprenyl phosphate, yielding undecaprenyl-pyrophosphoryl-MurNAc-pentapeptide, known as lipid I. The polypeptide is Phospho-N-acetylmuramoyl-pentapeptide-transferase (Halorhodospira halophila (strain DSM 244 / SL1) (Ectothiorhodospira halophila (strain DSM 244 / SL1))).